Here is a 425-residue protein sequence, read N- to C-terminus: Voltage-dependent calcium channel gamma-8 subunit (425 aa).

The next 4 membrane-spanning stretches (helical) occupy residues 19-39, 129-149, 158-178, and 208-228; these read VQVL…TIAI, SIFP…VAAS, IILG…IGVI, and FGGL…NIYI. A phosphoserine mark is found at serine 252 and serine 255. The tract at residues 272-304 is disordered; it reads RRSRSSSRSSEPSPSRDASPGGPGGPGFASTDI. Residues 277–287 are compositionally biased toward low complexity; sequence SSRSSEPSPSR. Residues 318-338 form a helical membrane-spanning segment; the sequence is VAAGLAGAGGGGGGAVGAFGG. Residues 343-354 show a composition bias toward gly residues; sequence AGGGGGGGGGAG. 2 disordered regions span residues 343–365 and 377–425; these read AGGG…ASGF and GGGV…TTPV. Residues 387–401 are compositionally biased toward pro residues; that stretch reads PPAPPAPAPPAPSAP. Positions 412–425 are enriched in polar residues; it reads ASNTNTLNRKTTPV.

It belongs to the PMP-22/EMP/MP20 family. CACNG subfamily. Interacts with CACNA1C. Identified in a complex with the L-type calcium channel subunits CACNA1C, CACNA2D1 and either CACNB1 or CACNB2. Acts as an auxiliary subunit for AMPA-selective glutamate receptors (AMPARs). Found in a complex with GRIA1, GRIA2, GRIA3, GRIA4, CNIH2, CNIH3, CACNG2, CACNG3, CACNG4, CACNG5 and CACNG7. Interacts with CNIH2. Found in a complex with GRIA1, GRIA2, GRIA3, GRIA4, DLG4 and CNIH2. Palmitoylated. Probably palmitoylated by ZDHHC3 and ZDHHC7. As to expression, detected in heart left ventricle.

It is found in the cell membrane. It localises to the postsynaptic density membrane. Its function is as follows. Regulates the activity of L-type calcium channels that contain CACNA1C as pore-forming subunit. Regulates the trafficking and gating properties of AMPA-selective glutamate receptors (AMPARs). Promotes their targeting to the cell membrane and synapses and modulates their gating properties by slowing their rates of activation, deactivation and desensitization and by mediating their resensitization. Does not show subunit-specific AMPA receptor regulation and regulates all AMPAR subunits. The protein is Voltage-dependent calcium channel gamma-8 subunit of Homo sapiens (Human).